Here is a 930-residue protein sequence, read N- to C-terminus: Protein translocase subunit SecA (930 aa).

ATP is bound by residues Gln83, 101–105, and Asp491; that span reads GEGKT.

It belongs to the SecA family. Monomer and homodimer. Part of the essential Sec protein translocation apparatus which comprises SecA, SecYEG and auxiliary proteins SecDF. Other proteins may also be involved.

The protein localises to the cell inner membrane. Its subcellular location is the cellular thylakoid membrane. It localises to the cytoplasm. It carries out the reaction ATP + H2O + cellular proteinSide 1 = ADP + phosphate + cellular proteinSide 2.. Functionally, part of the Sec protein translocase complex. Interacts with the SecYEG preprotein conducting channel. Has a central role in coupling the hydrolysis of ATP to the transfer of proteins into and across the cell membrane, serving as an ATP-driven molecular motor driving the stepwise translocation of polypeptide chains across the membrane. Probably participates in protein translocation into and across both the cytoplasmic and thylakoid membranes in cyanobacterial cells. This Nostoc sp. (strain PCC 7120 / SAG 25.82 / UTEX 2576) protein is Protein translocase subunit SecA.